The chain runs to 437 residues: Chromosomal replication initiator protein DnaA (437 aa).

The interval 1–67 (MKNKIIASLK…KVVKDILGKD (67 aa)) is domain I, interacts with DnaA modulators. The segment at 67 to 97 (DATYEITFKEIPYETKVESGPLIKKRPLLIT) is domain II. The domain III, AAA+ region stretch occupies residues 98–313 (PLNPKYTFEN…GAILRLIAYR (216 aa)). ATP contacts are provided by glycine 141, glycine 143, lysine 144, and threonine 145. Positions 314-437 (NLYGTLNLSI…SKGFAQGESM (124 aa)) are domain IV, binds dsDNA.

This sequence belongs to the DnaA family. As to quaternary structure, oligomerizes as a right-handed, spiral filament on DNA at oriC.

Its subcellular location is the cytoplasm. Its function is as follows. Plays an essential role in the initiation and regulation of chromosomal replication. ATP-DnaA binds to the origin of replication (oriC) to initiate formation of the DNA replication initiation complex once per cell cycle. Binds the DnaA box (a 9 base pair repeat at the origin) and separates the double-stranded (ds)DNA. Forms a right-handed helical filament on oriC DNA; dsDNA binds to the exterior of the filament while single-stranded (ss)DNA is stabiized in the filament's interior. The ATP-DnaA-oriC complex binds and stabilizes one strand of the AT-rich DNA unwinding element (DUE), permitting loading of DNA polymerase. After initiation quickly degrades to an ADP-DnaA complex that is not apt for DNA replication. Binds acidic phospholipids. This is Chromosomal replication initiator protein DnaA from Thermosipho melanesiensis (strain DSM 12029 / CIP 104789 / BI429).